Here is a 237-residue protein sequence, read N- to C-terminus: Terpene cyclase spyD (237 aa).

Transmembrane regions (helical) follow at residues 17-37 (IYNV…IVTV), 47-67 (AIPL…VLVY), 71-91 (YLLF…IVYG), 109-129 (HLPL…YALA), 138-158 (IHGG…CQLL), 167-187 (SWTM…GEFL), and 206-226 (WCTG…WYMG).

It belongs to the paxB family.

The protein localises to the membrane. It carries out the reaction (S)-(2E,6E,10E)-epoxygeranylgeranyl-triacetate lactone = sartorypyrone F. The catalysed reaction is (S)-(2E,6E,10E)-epoxygeranylgeranyl-triacetate lactone = sartorypyrone D. It functions in the pathway secondary metabolite biosynthesis; terpenoid biosynthesis. Functionally, terpene cyclase; part of the gene cluster that mediates the biosynthesis of meroterpenoids called sartorypyrones. Within the pathway, spyD catalyzes the cyclization of epoxygeranylgeranyl-triacetate lactone. SpyD exhibits promiscuous activity, resulting in the formation of bicyclic sartorypyrone F and monocyclic sartorypyrone D. The biosynthesis of sartorypyrones begins with the production of triacetic acid lactone (TAL) by the NR-PKS spyA using one molecule of acetyl-CoA and two molecules of malonyl-CoA. The prenyltransferase spyF then conjugates geranylgeranyl pyrophosphate (GGPP) to TAL to form geranylgeranyl-triacetate lactone, for which the pathway-specific geranylgeranyl pyrophosphate synthase (GGPS) spyE is required to provide GGPP. Subsequently, geranylgeranyl-triacetate lactone is epoxidized at the terminal olein by the FAD-dependent monooxygenase spyC, followed by cyclization of the terpenoid component catalyzed by the terpene cyclase spyD to produce both the bicyclic sartorypyrone F and the monocyclic sartorypyrone D. Finally, the last step of the biosynthesis involves the acetylation of the meroterpenoids sartorypyrones D and F by the acetyltransferase SpyB to produce sartorypyrones A and G, respectively. This is Terpene cyclase spyD from Aspergillus fumigatus (strain ATCC MYA-4609 / CBS 101355 / FGSC A1100 / Af293) (Neosartorya fumigata).